The sequence spans 185 residues: Elongation factor P (185 aa).

The protein belongs to the elongation factor P family.

The protein resides in the cytoplasm. It functions in the pathway protein biosynthesis; polypeptide chain elongation. In terms of biological role, involved in peptide bond synthesis. Stimulates efficient translation and peptide-bond synthesis on native or reconstituted 70S ribosomes in vitro. Probably functions indirectly by altering the affinity of the ribosome for aminoacyl-tRNA, thus increasing their reactivity as acceptors for peptidyl transferase. The chain is Elongation factor P from Geobacillus sp. (strain WCH70).